The chain runs to 430 residues: MEKIIVRGGKQLNGSVKMEGAKNAVLPVIAATLLASKGTSVLKNVPNLSDVFTINEVLKYLNADVSFVNDEVTVDATGEITSDAPFEYVRKMRASIVVMGPLLARTGSARVALPGGCAIGSRPVDLHLKGFEAMGAIVKIENGYIEATAEKLVGAKVYLDFPSVGATQNIMMAATLAEGTTVIENVAREPEIVDLANFLNQMGARVIGAGTEVIRIEGVKELTATEHSIIPDRIEAGTFMIAAAITGGNVLIEDAVPEHISSLIAKLEEMGVQIIEEENGIRVIGPDKLKAVDVKTMPHPGFPTDMQSQMMVIQMLSEGTSIMTETVFENRFMHVEEMRRMNADMKIEGHSVIISGPAKLQGAEVAATDLRAAAALILAGLVADGYTQVTELKYLDRGYNNFHGKLQALGADVERVDDSKIDVTNLASLF.

22–23 serves as a coordination point for phosphoenolpyruvate; sequence KN. R93 serves as a coordination point for UDP-N-acetyl-alpha-D-glucosamine. The Proton donor role is filled by C117. C117 is subject to 2-(S-cysteinyl)pyruvic acid O-phosphothioketal. UDP-N-acetyl-alpha-D-glucosamine-binding positions include 122–126, D305, and V327; that span reads RPVDL.

The protein belongs to the EPSP synthase family. MurA subfamily.

Its subcellular location is the cytoplasm. It catalyses the reaction phosphoenolpyruvate + UDP-N-acetyl-alpha-D-glucosamine = UDP-N-acetyl-3-O-(1-carboxyvinyl)-alpha-D-glucosamine + phosphate. It functions in the pathway cell wall biogenesis; peptidoglycan biosynthesis. Cell wall formation. Adds enolpyruvyl to UDP-N-acetylglucosamine. This Listeria innocua serovar 6a (strain ATCC BAA-680 / CLIP 11262) protein is UDP-N-acetylglucosamine 1-carboxyvinyltransferase 1.